A 925-amino-acid polypeptide reads, in one-letter code: Ubp5-interacting protein ftp105 (925 aa).

Residues 650–664 (EGSSDFESKSSDNTS) are compositionally biased toward low complexity. Residues 650–671 (EGSSDFESKSSDNTSLDGTPLQ) form a disordered region.

It belongs to the hid-1 family. As to quaternary structure, interacts with ubp5.

The protein resides in the cytoplasm. It is found in the golgi apparatus. Its function is as follows. Required for the localization of ubp5 to the Golgi apparatus. Involved in detoxification of cadmium ion. In Schizosaccharomyces pombe (strain 972 / ATCC 24843) (Fission yeast), this protein is Ubp5-interacting protein ftp105 (ftp105).